The chain runs to 153 residues: Transcriptional repressor NrdR (153 aa).

A zinc finger lies at 3 to 34 (CPFCNNINTQVKDSRAIEDDILIRRRRICLVC). Residues 49–139 (FMVIKKNGET…VYMNFKNIND (91 aa)) form the ATP-cone domain.

This sequence belongs to the NrdR family. Zn(2+) serves as cofactor.

Functionally, negatively regulates transcription of bacterial ribonucleotide reductase nrd genes and operons by binding to NrdR-boxes. The polypeptide is Transcriptional repressor NrdR (Ehrlichia canis (strain Jake)).